The sequence spans 32 residues: uncharacterized protein (32 aa).

This is an uncharacterized protein from Haemophilus influenzae (strain ATCC 51907 / DSM 11121 / KW20 / Rd).